Reading from the N-terminus, the 246-residue chain is CTD nuclear envelope phosphatase 1 homolog (246 aa).

The chain crosses the membrane as a helical span at residues 3–23 (TIAQSVFCFLAGFFNFFLLYF). In terms of domain architecture, FCP1 homology spans 53-220 (LTVKRKILVL…LNLLPFLDAL (168 aa)).

It belongs to the dullard family.

The protein localises to the membrane. Its subcellular location is the nucleus envelope. It carries out the reaction O-phospho-L-seryl-[protein] + H2O = L-seryl-[protein] + phosphate. It catalyses the reaction O-phospho-L-threonyl-[protein] + H2O = L-threonyl-[protein] + phosphate. Its function is as follows. Serine/threonine protein phosphatase that may dephosphorylate and activate lipin-like phosphatases. Lipins are phosphatidate phosphatases that catalyze the conversion of phosphatidic acid to diacylglycerol and control the metabolism of fatty acids at different levels. May indirectly modulate the lipid composition of nuclear and/or endoplasmic reticulum membranes and be required for proper nuclear membrane morphology and/or dynamics. Contributes to closure of nuclear envelope (NE) holes and prevents excess nuclear membranes after meiosis and mitosis, possibly through spatial regulation of lipin. May limit the production of endoplasmic reticulum (ER) sheets proximal to the NE to prevent the ER membranes that feed into NE openings from invading the nuclear interior and thereby restrict nuclear transport to nuclear pore complexes (NPCs). May also indirectly regulate the production of lipid droplets and triacylglycerol. In Caenorhabditis elegans, this protein is CTD nuclear envelope phosphatase 1 homolog (cnep-1).